The sequence spans 406 residues: Cysteine desulfurase (406 aa).

K226 bears the N6-(pyridoxal phosphate)lysine mark. C364 acts as the Cysteine persulfide intermediate in catalysis.

Belongs to the class-V pyridoxal-phosphate-dependent aminotransferase family. Csd subfamily. Homodimer. Interacts with SufE and the SufBCD complex composed of SufB, SufC and SufD. The interaction with SufE is required to mediate the direct transfer of the sulfur atom from the S-sulfanylcysteine. Requires pyridoxal 5'-phosphate as cofactor.

The protein resides in the cytoplasm. The catalysed reaction is (sulfur carrier)-H + L-cysteine = (sulfur carrier)-SH + L-alanine. The enzyme catalyses L-selenocysteine + AH2 = hydrogenselenide + L-alanine + A + H(+). It participates in cofactor biosynthesis; iron-sulfur cluster biosynthesis. Functionally, cysteine desulfurases mobilize the sulfur from L-cysteine to yield L-alanine, an essential step in sulfur metabolism for biosynthesis of a variety of sulfur-containing biomolecules. Component of the suf operon, which is activated and required under specific conditions such as oxidative stress and iron limitation. Acts as a potent selenocysteine lyase in vitro, that mobilizes selenium from L-selenocysteine. Selenocysteine lyase activity is however unsure in vivo. The protein is Cysteine desulfurase of Escherichia coli O157:H7 (strain EC4115 / EHEC).